Here is a 615-residue protein sequence, read N- to C-terminus: Alpha-1,3-galactosidase B (615 aa).

The first 23 residues, 1–23 (MRTFLSLKTCLLSALLLCVNSIA), serve as a signal peptide directing secretion. PbH1 repeat units follow at residues 282-313 (SKNI…HFMG), 423-445 (TPDA…LVST), 446-467 (PGKV…LIAG), 478-500 (VKDV…YQFC), 520-541 (HRNI…LFAR), and 543-573 (VNGL…TLEA).

The protein belongs to the glycosyl hydrolase 110 family. B subfamily.

The enzyme catalyses Hydrolysis of terminal, non-reducing branched (1-&gt;3)-alpha-D-galactosidic residues, producing free D-galactose.. It catalyses the reaction Hydrolysis of terminal, non-reducing linear (1-&gt;3)-alpha-D-galactosidic residues, producing free D-galactose.. It carries out the reaction Hydrolysis of terminal, non-reducing alpha-D-galactose residues in alpha-D-galactosides, including galactose oligosaccharides, galactomannans and galactolipids.. In terms of biological role, alpha-galactosidase. Removes both branched alpha-1,3-linked galactose residues of blood group B antigens and linear alpha-1,3-linked galactose structures. The chain is Alpha-1,3-galactosidase B (glaB) from Bacteroides thetaiotaomicron (strain ATCC 29148 / DSM 2079 / JCM 5827 / CCUG 10774 / NCTC 10582 / VPI-5482 / E50).